The sequence spans 84 residues: U4-theraphotoxin-Hhn1b (84 aa).

Residues 1–22 (MKVTLTAILTCAAVLVLHTTAA) form the signal peptide. The propeptide occupies 23 to 47 (EELEESQLMEVGMPDTELAAVDEER). 3 cysteine pairs are disulfide-bonded: cysteine 51-cysteine 65, cysteine 55-cysteine 76, and cysteine 70-cysteine 81.

Belongs to the neurotoxin 12 (Hwtx-2) family. 02 (Hwtx-2) subfamily. Expressed by the venom gland.

The protein resides in the secreted. Postsynaptic neurotoxin. The polypeptide is U4-theraphotoxin-Hhn1b (Cyriopagopus hainanus (Chinese bird spider)).